We begin with the raw amino-acid sequence, 268 residues long: Ribosome maturation factor RimP (268 aa).

Disordered stretches follow at residues 1 to 41 and 223 to 268; these read MGSA…GRGG and LVEP…EMTR. The span at 32-41 shows a compositional bias: low complexity; the sequence is PSGSARGRGG. The span at 248–257 shows a compositional bias: basic and acidic residues; sequence ESNDDGREAG.

Belongs to the RimP family.

It localises to the cytoplasm. Functionally, required for maturation of 30S ribosomal subunits. The polypeptide is Ribosome maturation factor RimP (Frankia casuarinae (strain DSM 45818 / CECT 9043 / HFP020203 / CcI3)).